The following is a 324-amino-acid chain: Probable non-intrinsic ABC protein 5 (324 aa).

Residues aspartate 2–glycine 111 enclose the ABC transporter domain. The next 2 helical transmembrane spans lie at tyrosine 212–phenylalanine 232 and leucine 259–valine 279. One can recognise an ABC transmembrane type-1 domain in the interval valine 222–serine 324.

Belongs to the ABC transporter superfamily.

Its subcellular location is the membrane. This is Probable non-intrinsic ABC protein 5 (NAP5) from Arabidopsis thaliana (Mouse-ear cress).